The following is a 214-amino-acid chain: Zinc finger protein 11 (214 aa).

Residues 1–27 form a disordered region; the sequence is MKRTHLASFSNRDKTQEEEGEDGNGDN. The C2H2-type zinc-finger motif lies at 49-71; it reads YTCSFCRREFRSAQALGGHMNVH. The Nuclear localization signal signature appears at 72–79; it reads RRDRAKLR. Positions 89–130 are disordered; sequence HHHTPIANPNPNFSSSSSSSTTTAHLEPSLTNQRSKTTPFPS. The span at 102 to 111 shows a compositional bias: low complexity; it reads SSSSSSSTTT. A compositionally biased stretch (polar residues) spans 117–128; the sequence is SLTNQRSKTTPF.

In terms of tissue distribution, expressed in roots, stems, axillary buds and flowers.

Its subcellular location is the nucleus. In terms of biological role, probable transcription factor that may regulate cell division and growth. The sequence is that of Zinc finger protein 11 from Arabidopsis thaliana (Mouse-ear cress).